Consider the following 503-residue polypeptide: ESX-5 secretion system protein EccD5 (503 aa).

A run of 11 helical transmembrane segments spans residues 137–157, 169–189, 200–220, 224–244, 250–270, 272–292, 359–379, 382–402, 413–433, 439–459, and 480–500; these read IVAV…ATGV, LTTI…MLLL, VADI…AAAP, VGSP…ALAL, RLGI…AALA, MVAA…CVVA, FLSG…TSLC, HTGQ…FLLL, SITL…RYAL, LAVS…MAAA, and YLCL…YAAI.

It belongs to the EccD/Snm4 family. In terms of assembly, part of the ESX-5 / type VII secretion system (T7SS), which is composed of cytosolic and membrane components. The ESX-5 membrane complex is composed of EccB5, EccC5, EccD5 and EccE5.

The protein localises to the cell inner membrane. Its function is as follows. Part of the ESX-5 specialized secretion system, which is responsible for the secretion of EsxN and a number of PE_PGRS and PPE proteins, including PPE41. The protein is ESX-5 secretion system protein EccD5 of Mycobacterium tuberculosis (strain CDC 1551 / Oshkosh).